A 679-amino-acid chain; its full sequence is MISASRAAAARLVGTTASRSPAAARHQDGWNGLSHEAFRFVSRRDYASEAIKGAVVGIDLGTTNSCVAVMEGKQAKVLENAEGARTTPSVVAFTPDGERLVGMPAKRQAVTNPNNTFYATKRLIGRRYDDPEVQKDTKNVPFKIVRASNGDAWVEAHGKLYSPSQIGAFVLMKMKETAENYLGHTAKNAVITVPAYFNDSQRQATKDAGQISGLNVLRVINEPTAAALAYGLDKSEDKVIAVYDLGGGTFDISILEIQKGVFEVKSTNGDTFLGGEDFDQALLRHIVKEFKRETGVDLTKDNMALQRVREAAEKAKCELSSSVQTDINLPYLTMDASGPKHLNMKLTRAQFEGIVTDLIKRTIAPCQKAMQDAEVSKSDIGEVILVGGMTRMPKVQQTVQDLFGRAPSKAVNPDEAVAIGAAIQGGVLAGDVTDVLLLDVTPLSLGIETLGGVFTKLINRNTTIPTKKSQVFSTAADGQTQVEIKVCQGEREMAGDNKLLGQFTLIGIPPAPRGVPQIEVTFDIDANGIVHVSAKDKGTGREQQIVIQSSGGLSKDDIENMVKNAEKYAEEDRRKKERVEAVNMAEGIIHDTETKMEEFKDQLPADECNKLKEEISKMRELLARKDSETGENIRQAASSLQQASLKLFEMAYKKMASEREGSGSSSTGEQKEDQKEEKQ.

The transit peptide at 1-46 (MISASRAAAARLVGTTASRSPAAARHQDGWNGLSHEAFRFVSRRDY) directs the protein to the mitochondrion. Residues 1 to 432 (MISASRAAAA…IQGGVLAGDV (432 aa)) are interaction with NFS1. Residues Thr63 and Asn64 each coordinate ADP. A nucleotide-binding domain (NBD) region spans residues 63–431 (TNSCVAVMEG…AIQGGVLAGD (369 aa)). Position 76 is an N6-acetyllysine (Lys76). At Thr87 the chain carries Phosphothreonine. 2 positions are modified to N6-acetyllysine; alternate: Lys135 and Lys138. Lys135 and Lys138 each carry N6-succinyllysine; alternate. Lys143 carries the post-translational modification N6-acetyllysine. N6-acetyllysine; alternate is present on Lys206. Lys206 is subject to N6-succinyllysine; alternate. An N6-malonyllysine; alternate modification is found at Lys206. An N6-acetyllysine mark is found at Lys234 and Lys288. N6-acetyllysine; alternate is present on Lys300. Position 300 is an N6-succinyllysine; alternate (Lys300). Residues Glu313, Lys316, and Ser320 each contribute to the ADP site. Position 360 is an N6-acetyllysine; alternate (Lys360). Residue Lys360 is modified to N6-succinyllysine; alternate. N6-succinyllysine is present on Lys368. Positions 388 and 391 each coordinate ADP. Lys394 carries the N6-succinyllysine modification. Ser408 is modified (phosphoserine). The segment at 432–441 (VTDVLLLDVT) is interdomain linker. The tract at residues 432 to 679 (VTDVLLLDVT…QKEDQKEEKQ (248 aa)) is interaction with FXN and ISCU. Positions 442-679 (PLSLGIETLG…QKEDQKEEKQ (238 aa)) are substrate-binding domain (SBD). Arg513 bears the Omega-N-methylarginine mark. N6-acetyllysine; alternate is present on residues Lys567 and Lys600. N6-succinyllysine; alternate is present on residues Lys567 and Lys600. Lys610 carries the N6-succinyllysine modification. Lys612 carries the post-translational modification N6-acetyllysine. An N6-acetyllysine; alternate modification is found at Lys646. The residue at position 646 (Lys646) is an N6-succinyllysine; alternate. The interval 655–679 (MASEREGSGSSSTGEQKEDQKEEKQ) is disordered. A compositionally biased stretch (basic and acidic residues) spans 669-679 (EQKEDQKEEKQ).

It belongs to the heat shock protein 70 family. In terms of assembly, interacts strongly with the intermediate form of FXN and weakly with its mature form. Interacts with HSCB. Associates with the mitochondrial contact site and cristae organizing system (MICOS) complex, composed of at least MICOS10/MIC10, CHCHD3/MIC19, CHCHD6/MIC25, APOOL/MIC27, IMMT/MIC60, APOO/MIC23/MIC26 and QIL1/MIC13. This complex was also known under the names MINOS or MitOS complex. The MICOS complex associates with mitochondrial outer membrane proteins SAMM50, MTX1, MTX2 and DNAJC11, mitochondrial inner membrane protein TMEM11 and with HSPA9. Interacts with DNLZ, the interaction is required to prevent self-aggregation. Interacts with TESPA1. Interacts with PDPN. Interacts with NFU1, NFS1 and ISCU. Interacts with TP53; the interaction promotes TP53 degradation. Interacts (via SBD domain) with UBXN2A; the interaction with UBXN2A inhibits HSPA9 interaction with and degradation of TP53, thereby promotes TP53 translocation to the nucleus. Interacts with ITPR1 AND VDAC1; this interaction couples ITPR1 to VDAC1. Component of the TIM23 mitochondrial inner membrane pre-sequence translocase complex.

It is found in the mitochondrion. The protein resides in the nucleus. Its subcellular location is the nucleolus. It localises to the cytoplasm. The protein localises to the mitochondrion matrix. The catalysed reaction is ATP + H2O = ADP + phosphate + H(+). The chaperone activity is regulated by ATP-induced allosteric coupling of the nucleotide-binding (NBD) and substrate-binding (SBD) domains. ATP binding in the nucleotide-binding pocket (NBP) leads to a conformational change in the NBD, which is transferred through the interdomain linker (IDL) to the substrate-binding domain (SBD). This elicits a reduced substrate affinity and a faster substrate exchange rate. Upon hydrolysis of ATP to ADP, the protein undergoes a conformational change that increases its affinity for substrate proteins. It cycles through repeated phases of ATP hydrolysis and nucleotide exchange, facilitating repeated cycles of substrate binding and release. Functions in collaboration with co-chaperones. Functions with the co-chaperone, DNLZ, to maintain solubility and regulate ATP hydrolysis. Nucleotide exchange factors, GRPEL1 and GRPEL2, accelerate nucleotide exchange. Mitochondrial chaperone that plays a key role in mitochondrial protein import, folding, and assembly. Plays an essential role in the protein quality control system, the correct folding of proteins, the re-folding of misfolded proteins, and the targeting of proteins for subsequent degradation. These processes are achieved through cycles of ATP binding, ATP hydrolysis, and ADP release, mediated by co-chaperones. In mitochondria, it associates with the TIM (translocase of the inner membrane) protein complex to assist in the import and folding of mitochondrial proteins. Plays an important role in mitochondrial iron-sulfur cluster (ISC) biogenesis, interacts with and stabilizes ISC cluster assembly proteins FXN, NFU1, NFS1 and ISCU. Regulates erythropoiesis via stabilization of ISC assembly. Regulates mitochondrial calcium-dependent apoptosis by coupling two calcium channels, ITPR1 and VDAC1, at the mitochondria-associated endoplasmic reticulum (ER) membrane to facilitate calcium transport from the ER lumen to the mitochondria intermembrane space, providing calcium for the downstream calcium channel MCU, which releases it into the mitochondrial matrix. Although primarily located in the mitochondria, it is also found in other cellular compartments. In the cytosol, it associates with proteins involved in signaling, apoptosis, or senescence. It may play a role in cell cycle regulation via its interaction with and promotion of degradation of TP53. May play a role in the control of cell proliferation and cellular aging. Protects against reactive oxygen species (ROS). Extracellular HSPA9 plays a cytoprotective role by preventing cell lysis following immune attack by the membrane attack complex by disrupting formation of the complex. The chain is Stress-70 protein, mitochondrial from Rattus norvegicus (Rat).